A 356-amino-acid chain; its full sequence is 16-methoxy-2,3-dihydro-3-hydroxytabersonine synthase (356 aa).

7 residues coordinate Zn(2+): Cys-49, His-71, Cys-102, Cys-105, Cys-108, Cys-116, and Cys-162. NAD(+) is bound at residue 187–192 (GLGAVG).

This sequence belongs to the zinc-containing alcohol dehydrogenase family. Zn(2+) serves as cofactor. In terms of tissue distribution, expressed in leaf epidermis.

The catalysed reaction is (3R)-3-hydroxy-16-methoxy-2,3-dihydrotabersonine + A = (3R)-1,2-didehydro-3-hydroxy-16-methoxy-2,3-dihydrotabersonine + AH2. It carries out the reaction (3R)-3-hydroxy-2,3-dihydrotabersonine + A = (3R)-1,2-didehydro-3-hydroxy-2,3-dihydrotabersonine + AH2. Its pathway is alkaloid biosynthesis; vindoline biosynthesis. Functionally, converts the unstable imine alcohols produced by CYP71D1V2/T3O into 3-hydroxy-16-methoxy-2,3-dihydrotabersonine or 3-hydroxy-2,3-dihydrotabersonine. The polypeptide is 16-methoxy-2,3-dihydro-3-hydroxytabersonine synthase (Catharanthus roseus (Madagascar periwinkle)).